A 435-amino-acid polypeptide reads, in one-letter code: Eukaryotic peptide chain release factor subunit 1-2 (435 aa).

N-acetylalanine is present on Ala2.

This sequence belongs to the eukaryotic release factor 1 family. In terms of assembly, heterodimer of two subunits, one of which binds GTP. Interacts with OR.

It is found in the cytoplasm. In terms of biological role, directs the termination of nascent peptide synthesis (translation) in response to the termination codons UAA, UAG and UGA. Modulates plant growth and development. In Brassica oleracea var. botrytis (Cauliflower), this protein is Eukaryotic peptide chain release factor subunit 1-2.